The chain runs to 669 residues: Cytokinesis protein 2 (669 aa).

One can recognise an F-BAR domain in the interval 1-261; that stretch reads MSYSYEACFW…HLNSFTAADE (261 aa). A coiled-coil region spans residues 134–200; sequence KKGCEVLQKK…LKQEYKASQK (67 aa). Phosphoserine is present on residues Ser-337 and Ser-366. The segment at 372-518 is disordered; sequence VQLQSNVDDS…DYNTRRDTST (147 aa). Basic and acidic residues-rich tracts occupy residues 381–391 and 397–413; these read SVLRQKPDKPR and EQLKPDEDSKNPDEKGL. Ser-421 bears the Phosphoserine mark. Composition is skewed to low complexity over residues 421–431 and 445–455; these read SLSSPSESSSS and MESMTTSVSSM. The SH3 domain maps to 599-667; it reads PVIEYAKAMY…PYNFIQLLHQ (69 aa).

In terms of assembly, interacts with INN1.

It is found in the cytoplasm. The protein resides in the cytoskeleton. Its subcellular location is the bud neck. Its function is as follows. Throughout most of the cell cycle it forms a double ring that coincides with the septins. After the onset of mitosis, forms a ring-like structure which colocalizes with the medial actin ring. Mediates cytoskeletal rearrangements required for cytokinesis. In conjunction with the medial actin ring exhibits contraction-like action. The sequence is that of Cytokinesis protein 2 (HOF1) from Saccharomyces cerevisiae (strain ATCC 204508 / S288c) (Baker's yeast).